A 91-amino-acid polypeptide reads, in one-letter code: uncharacterized protein (91 aa).

A signal peptide spans 1–25; it reads MLLQRIGIEHLRIWILLLLISLVPA.

This is an uncharacterized protein from Caenorhabditis elegans.